The chain runs to 177 residues: Large ribosomal subunit protein uL6 (177 aa).

The protein belongs to the universal ribosomal protein uL6 family. Part of the 50S ribosomal subunit.

In terms of biological role, this protein binds to the 23S rRNA, and is important in its secondary structure. It is located near the subunit interface in the base of the L7/L12 stalk, and near the tRNA binding site of the peptidyltransferase center. The chain is Large ribosomal subunit protein uL6 from Cupriavidus necator (strain ATCC 17699 / DSM 428 / KCTC 22496 / NCIMB 10442 / H16 / Stanier 337) (Ralstonia eutropha).